The chain runs to 250 residues: Triosephosphate isomerase (250 aa).

9-11 (NWK) is a binding site for substrate. Catalysis depends on histidine 96, which acts as the Electrophile. Glutamate 166 acts as the Proton acceptor in catalysis. Residues glycine 172, serine 212, and 233–234 (GG) each bind substrate.

Belongs to the triosephosphate isomerase family. As to quaternary structure, homodimer.

It localises to the cytoplasm. It catalyses the reaction D-glyceraldehyde 3-phosphate = dihydroxyacetone phosphate. It functions in the pathway carbohydrate biosynthesis; gluconeogenesis. Its pathway is carbohydrate degradation; glycolysis; D-glyceraldehyde 3-phosphate from glycerone phosphate: step 1/1. Functionally, involved in the gluconeogenesis. Catalyzes stereospecifically the conversion of dihydroxyacetone phosphate (DHAP) to D-glyceraldehyde-3-phosphate (G3P). This is Triosephosphate isomerase from Chlorobium phaeobacteroides (strain BS1).